We begin with the raw amino-acid sequence, 383 residues long: Putative glutamate--cysteine ligase 2-1 (383 aa).

The protein belongs to the glutamate--cysteine ligase type 2 family. YbdK subfamily.

The enzyme catalyses L-cysteine + L-glutamate + ATP = gamma-L-glutamyl-L-cysteine + ADP + phosphate + H(+). Its function is as follows. ATP-dependent carboxylate-amine ligase which exhibits weak glutamate--cysteine ligase activity. This chain is Putative glutamate--cysteine ligase 2-1, found in Arthrobacter sp. (strain FB24).